The chain runs to 352 residues: Coproporphyrin III ferrochelatase (352 aa).

Fe-coproporphyrin III contacts are provided by serine 52 and tyrosine 121. Fe(2+)-binding residues include histidine 178 and glutamate 267.

Belongs to the ferrochelatase family.

It is found in the cytoplasm. It carries out the reaction Fe-coproporphyrin III + 2 H(+) = coproporphyrin III + Fe(2+). The protein operates within porphyrin-containing compound metabolism; protoheme biosynthesis. Its function is as follows. Involved in coproporphyrin-dependent heme b biosynthesis. Catalyzes the insertion of ferrous iron into coproporphyrin III to form Fe-coproporphyrin III. The protein is Coproporphyrin III ferrochelatase of Propionibacterium freudenreichii subsp. freudenreichii.